The sequence spans 283 residues: MTAQLIDGNALSRQLRADVARRAALLKERGTTPGLAVVLVGDNPASQVYVRNKVKACEESGLHSVLEKYDAAMSEAELLARVDALNNDPSIHGILVQLPLPAHIDAQKVIEAISPAKDVDGFHIASAGALMTGMPGFWPCTPYGCMKMLEHIGYDLRGKHAVVIGRSNIVGKPMALMLLAKDATVTVCHSRTADLKAQTLQADVIVAAVGRRNVLTADMVKPGAVVIDVGMNRNDEGRLCGDVDFDGVREVAGHITPVPGGVGPMTITMLLVNTLEAAERAAG.

NADP(+)-binding positions include 165–167 and serine 190; that span reads GRS.

The protein belongs to the tetrahydrofolate dehydrogenase/cyclohydrolase family. Homodimer.

The catalysed reaction is (6R)-5,10-methylene-5,6,7,8-tetrahydrofolate + NADP(+) = (6R)-5,10-methenyltetrahydrofolate + NADPH. It catalyses the reaction (6R)-5,10-methenyltetrahydrofolate + H2O = (6R)-10-formyltetrahydrofolate + H(+). The protein operates within one-carbon metabolism; tetrahydrofolate interconversion. In terms of biological role, catalyzes the oxidation of 5,10-methylenetetrahydrofolate to 5,10-methenyltetrahydrofolate and then the hydrolysis of 5,10-methenyltetrahydrofolate to 10-formyltetrahydrofolate. The sequence is that of Bifunctional protein FolD from Paracidovorax citrulli (strain AAC00-1) (Acidovorax citrulli).